The primary structure comprises 209 residues: Endonuclease III (209 aa).

The HhH domain occupies 108 to 127 (RTELESLPGVGRKTANIILN). Cys-187, Cys-194, Cys-197, and Cys-203 together coordinate [4Fe-4S] cluster.

Belongs to the Nth/MutY family. Requires [4Fe-4S] cluster as cofactor.

The enzyme catalyses 2'-deoxyribonucleotide-(2'-deoxyribose 5'-phosphate)-2'-deoxyribonucleotide-DNA = a 3'-end 2'-deoxyribonucleotide-(2,3-dehydro-2,3-deoxyribose 5'-phosphate)-DNA + a 5'-end 5'-phospho-2'-deoxyribonucleoside-DNA + H(+). In terms of biological role, DNA repair enzyme that has both DNA N-glycosylase activity and AP-lyase activity. The DNA N-glycosylase activity releases various damaged pyrimidines from DNA by cleaving the N-glycosidic bond, leaving an AP (apurinic/apyrimidinic) site. The AP-lyase activity cleaves the phosphodiester bond 3' to the AP site by a beta-elimination, leaving a 3'-terminal unsaturated sugar and a product with a terminal 5'-phosphate. In Buchnera aphidicola subsp. Schizaphis graminum (strain Sg), this protein is Endonuclease III.